The primary structure comprises 310 residues: Fructose-bisphosphate aldolase/6-deoxy-5-ketofructose 1-phosphate synthase (310 aa).

Substrate is bound by residues 48-49 (DQ), histidine 53, aspartate 57, and tryptophan 180. Residue tyrosine 182 is the Proton donor of the active site. Substrate is bound by residues arginine 184, 213–215 (KVN), 241–243 (AGG), and 270–271 (GR). Residue lysine 213 is the Schiff-base intermediate with dihydroxyacetone-P of the active site. The Schiff-base intermediate with substrate role is filled by lysine 213.

It belongs to the DeoC/FbaB aldolase family.

It carries out the reaction beta-D-fructose 1,6-bisphosphate = D-glyceraldehyde 3-phosphate + dihydroxyacetone phosphate. The catalysed reaction is beta-D-fructose 1,6-bisphosphate + methylglyoxal = 1-deoxy-D-threo-hexo-2,5-diulose 6-phosphate + D-glyceraldehyde 3-phosphate. The enzyme catalyses beta-D-fructose 1-phosphate + methylglyoxal = 1-deoxy-D-threo-hexo-2,5-diulose 6-phosphate + D-glyceraldehyde. It functions in the pathway aromatic compound metabolism. In terms of biological role, catalyzes the transaldolization of either fructose-1-P or fructose-1,6-bisphosphate with methylglyoxal to produce 6-deoxy-5-ketofructose-1-phosphate (DKFP). Also catalyzes the reversible aldol condensation of dihydroxyacetone phosphate (DHAP or glycerone-phosphate) with glyceraldehyde 3-phosphate (G3P or GAP) to produce fructose 1,6-bisphosphate (FBP). The polypeptide is Fructose-bisphosphate aldolase/6-deoxy-5-ketofructose 1-phosphate synthase (Methanocaldococcus jannaschii (strain ATCC 43067 / DSM 2661 / JAL-1 / JCM 10045 / NBRC 100440) (Methanococcus jannaschii)).